A 467-amino-acid chain; its full sequence is Ribulose bisphosphate carboxylase large chain (467 aa).

The propeptide occupies M1–S2. P3 bears the N-acetylproline mark. K14 bears the N6,N6,N6-trimethyllysine mark. Substrate contacts are provided by N123 and T173. The active-site Proton acceptor is the K175. Residue K177 coordinates substrate. Mg(2+) is bound by residues K201, D203, and E204. Position 201 is an N6-carboxylysine (K201). The active-site Proton acceptor is the H294. Substrate-binding residues include R295, H327, and S379.

Belongs to the RuBisCO large chain family. Type I subfamily. In terms of assembly, heterohexadecamer of 8 large chains and 8 small chains; disulfide-linked. The disulfide link is formed within the large subunit homodimers. Requires Mg(2+) as cofactor. In terms of processing, the disulfide bond which can form in the large chain dimeric partners within the hexadecamer appears to be associated with oxidative stress and protein turnover.

The protein resides in the plastid. Its subcellular location is the chloroplast. It carries out the reaction 2 (2R)-3-phosphoglycerate + 2 H(+) = D-ribulose 1,5-bisphosphate + CO2 + H2O. The catalysed reaction is D-ribulose 1,5-bisphosphate + O2 = 2-phosphoglycolate + (2R)-3-phosphoglycerate + 2 H(+). In terms of biological role, ruBisCO catalyzes two reactions: the carboxylation of D-ribulose 1,5-bisphosphate, the primary event in carbon dioxide fixation, as well as the oxidative fragmentation of the pentose substrate in the photorespiration process. Both reactions occur simultaneously and in competition at the same active site. The protein is Ribulose bisphosphate carboxylase large chain of Calamus usitatus (Palm tree).